The primary structure comprises 88 residues: DNA-directed RNA polymerase subunit omega (88 aa).

The protein belongs to the RNA polymerase subunit omega family. As to quaternary structure, the RNAP catalytic core consists of 2 alpha, 1 beta, 1 beta' and 1 omega subunit. When a sigma factor is associated with the core the holoenzyme is formed, which can initiate transcription.

It carries out the reaction RNA(n) + a ribonucleoside 5'-triphosphate = RNA(n+1) + diphosphate. In terms of biological role, promotes RNA polymerase assembly. Latches the N- and C-terminal regions of the beta' subunit thereby facilitating its interaction with the beta and alpha subunits. The chain is DNA-directed RNA polymerase subunit omega from Clostridioides difficile (strain 630) (Peptoclostridium difficile).